Reading from the N-terminus, the 505-residue chain is Outer capsid protein VP5 (505 aa).

The interval 1–42 is involved in membrane permeabilization; sequence MGKFTSFLKRAGSATKKALTSDAAKRMYKMAGKTLQKVVESE.

It belongs to the orbivirus VP5 family.

The protein localises to the virion. VP5 protein is one of the two proteins (with VP2) which constitute the virus particle outer capsid. Acts as a membrane permeabilization protein that mediates release of viral particles from endosomal compartments into the cytoplasm. Permeabilization activity is probably negatively regulated by VP2 and is triggered by endosomal degradation of VP2 and exposure to low pH. The polypeptide is Outer capsid protein VP5 (Segment-6) (African horse sickness virus 9 (AHSV-9)).